A 724-amino-acid polypeptide reads, in one-letter code: uncharacterized protein (724 aa).

4 disordered regions span residues 97 to 131, 187 to 252, 309 to 434, and 454 to 473; these read RKSF…YPSP, ETKI…FETE, FETE…TSKL, and RGVE…VAEK. Polar residues predominate over residues 115–128; that stretch reads TRSASYSESNNSFY. The stretch at 187–217 forms a coiled coil; sequence ETKIGIEEENEESEILAEEKEEEDNDFSVLE. Residues 193–212 are compositionally biased toward acidic residues; it reads EEENEESEILAEEKEEEDND. Basic and acidic residues-rich tracts occupy residues 223 to 252 and 309 to 322; these read QEIK…FETE and FETE…DHSE. Composition is skewed to low complexity over residues 323 to 333 and 347 to 366; these read TTTSETDSTES and SPQT…SLRS. Positions 367-388 are enriched in pro residues; it reads QPPPPPPSPEHKAPAPPPPPPM. Over residues 400–410 the composition is skewed to polar residues; sequence FSKTHSTNGDN. 2 coiled-coil regions span residues 495–522 and 649–678; these read SYFQ…HSFQ and MELA…RAKR.

This is an uncharacterized protein from Arabidopsis thaliana (Mouse-ear cress).